Reading from the N-terminus, the 549-residue chain is Alpha-amylase (549 aa).

A signal peptide spans 1-34; it reads MLTFHRIIRKGWMFLLAFLLTALLFCPTGQPAKA. Ca(2+)-binding residues include aspartate 139, aspartate 196, alanine 218, aspartate 220, aspartate 231, and aspartate 237. Aspartate 196 provides a ligand contact to Na(+). Positions 220, 231, 237, and 238 each coordinate Na(+). Ca(2+) is bound at residue aspartate 239. The active-site Nucleophile is the aspartate 268. Histidine 272 is a Ca(2+) binding site. The active-site Proton donor is the glutamate 298. Residues glycine 337, phenylalanine 339, serine 440, aspartate 441, and aspartate 464 each coordinate Ca(2+).

This sequence belongs to the glycosyl hydrolase 13 family. In terms of assembly, monomer. It depends on Ca(2+) as a cofactor. Na(+) serves as cofactor.

It localises to the secreted. The catalysed reaction is Endohydrolysis of (1-&gt;4)-alpha-D-glucosidic linkages in polysaccharides containing three or more (1-&gt;4)-alpha-linked D-glucose units.. The protein is Alpha-amylase (amyS) of Geobacillus stearothermophilus (Bacillus stearothermophilus).